Here is a 331-residue protein sequence, read N- to C-terminus: Ketol-acid reductoisomerase (NADP(+)) (331 aa).

One can recognise a KARI N-terminal Rossmann domain in the interval 2–182 (AKIYTDKDAS…GATRAGVIET (181 aa)). Residues 25 to 28 (YGIQ), Arg-48, Ser-53, and 83 to 86 (DMEQ) contribute to the NADP(+) site. His-108 is an active-site residue. Residue Gly-134 participates in NADP(+) binding. One can recognise a KARI C-terminal knotted domain in the interval 183 to 328 (TFAEETETDL…AEMRKLLFGR (146 aa)). Mg(2+) contacts are provided by Asp-191, Glu-195, Glu-227, and Glu-231. Ser-252 is a binding site for substrate.

This sequence belongs to the ketol-acid reductoisomerase family. It depends on Mg(2+) as a cofactor.

The catalysed reaction is (2R)-2,3-dihydroxy-3-methylbutanoate + NADP(+) = (2S)-2-acetolactate + NADPH + H(+). The enzyme catalyses (2R,3R)-2,3-dihydroxy-3-methylpentanoate + NADP(+) = (S)-2-ethyl-2-hydroxy-3-oxobutanoate + NADPH + H(+). It functions in the pathway amino-acid biosynthesis; L-isoleucine biosynthesis; L-isoleucine from 2-oxobutanoate: step 2/4. Its pathway is amino-acid biosynthesis; L-valine biosynthesis; L-valine from pyruvate: step 2/4. Functionally, involved in the biosynthesis of branched-chain amino acids (BCAA). Catalyzes an alkyl-migration followed by a ketol-acid reduction of (S)-2-acetolactate (S2AL) to yield (R)-2,3-dihydroxy-isovalerate. In the isomerase reaction, S2AL is rearranged via a Mg-dependent methyl migration to produce 3-hydroxy-3-methyl-2-ketobutyrate (HMKB). In the reductase reaction, this 2-ketoacid undergoes a metal-dependent reduction by NADPH to yield (R)-2,3-dihydroxy-isovalerate. The protein is Ketol-acid reductoisomerase (NADP(+)) of Pyrobaculum islandicum (strain DSM 4184 / JCM 9189 / GEO3).